The following is a 140-amino-acid chain: Putative pre-16S rRNA nuclease (140 aa).

The protein belongs to the YqgF nuclease family.

The protein resides in the cytoplasm. Functionally, could be a nuclease involved in processing of the 5'-end of pre-16S rRNA. The sequence is that of Putative pre-16S rRNA nuclease from Mannheimia succiniciproducens (strain KCTC 0769BP / MBEL55E).